A 415-amino-acid chain; its full sequence is Magnesium-chelatase subunit ChlI, chloroplastic (415 aa).

A chloroplast-targeting transit peptide spans 1 to 67 (MASAFSPATA…APSATQQEAK (67 aa)). Intrachain disulfides connect Cys93–Cys184 and Cys345–Cys387.

Belongs to the Mg-chelatase subunits D/I family. The magnesium chelatase complex is a heterotrimer consisting of subunits CHLI, CHLD and CHLH.

The protein localises to the plastid. It is found in the chloroplast. It carries out the reaction protoporphyrin IX + Mg(2+) + ATP + H2O = Mg-protoporphyrin IX + ADP + phosphate + 3 H(+). Its pathway is porphyrin-containing compound metabolism; chlorophyll biosynthesis. With respect to regulation, redox regulation; active in reducing conditions, inactive in oxidizing conditions. Thioredoxins f and m mediate the reversible reductive activation of oxidized CHLI. In terms of biological role, involved in chlorophyll biosynthesis. Catalyzes the insertion of magnesium ion into protoporphyrin IX to yield Mg-protoporphyrin IX. The reaction takes place in two steps, with an ATP-dependent activation followed by an ATP-dependent chelation step. This Oryza sativa subsp. japonica (Rice) protein is Magnesium-chelatase subunit ChlI, chloroplastic (CHLI).